The sequence spans 245 residues: tRNA1(Val) (adenine(37)-N6)-methyltransferase (245 aa).

Belongs to the methyltransferase superfamily. tRNA (adenine-N(6)-)-methyltransferase family.

Its subcellular location is the cytoplasm. It carries out the reaction adenosine(37) in tRNA1(Val) + S-adenosyl-L-methionine = N(6)-methyladenosine(37) in tRNA1(Val) + S-adenosyl-L-homocysteine + H(+). In terms of biological role, specifically methylates the adenine in position 37 of tRNA(1)(Val) (anticodon cmo5UAC). This is tRNA1(Val) (adenine(37)-N6)-methyltransferase from Escherichia coli O157:H7 (strain EC4115 / EHEC).